A 474-amino-acid chain; its full sequence is Serine/threonine-protein kinase ksp1 (474 aa).

The Protein kinase domain occupies 9–280 (YKVERPLNKG…EAVLAVTKWT (272 aa)). ATP-binding positions include 15 to 23 (LNKGSYGTV) and K43. D137 acts as the Proton acceptor in catalysis. The interval 345 to 373 (VDENISTSSSPRSPASLAPVNNSERSYDS) is disordered. A compositionally biased stretch (low complexity) spans 350-363 (STSSSPRSPASLAP). S353, S354, S357, S378, S404, and S413 each carry phosphoserine.

Belongs to the protein kinase superfamily. Ser/Thr protein kinase family.

The protein localises to the cytoplasm. The protein resides in the nucleus. The enzyme catalyses L-seryl-[protein] + ATP = O-phospho-L-seryl-[protein] + ADP + H(+). It carries out the reaction L-threonyl-[protein] + ATP = O-phospho-L-threonyl-[protein] + ADP + H(+). The chain is Serine/threonine-protein kinase ksp1 (ksp1) from Schizosaccharomyces pombe (strain 972 / ATCC 24843) (Fission yeast).